The following is a 189-amino-acid chain: HGPRTase-like protein (189 aa).

It belongs to the purine/pyrimidine phosphoribosyltransferase family. Archaeal HPRT subfamily.

Functionally, may catalyze a purine salvage reaction, the substrate is unknown. This Halorhabdus utahensis (strain DSM 12940 / JCM 11049 / AX-2) protein is HGPRTase-like protein.